The following is a 350-amino-acid chain: Putative deoxyribonuclease-2 (350 aa).

Belongs to the DNase II family.

The protein is Putative deoxyribonuclease-2 of Burkholderia thailandensis (strain ATCC 700388 / DSM 13276 / CCUG 48851 / CIP 106301 / E264).